We begin with the raw amino-acid sequence, 316 residues long: Neuroguidin-B (316 aa).

Disordered regions lie at residues 124–169 (ENDP…SKVK) and 292–316 (VPFMKKSKKGPKKSKKKKGFSRRRH). The span at 145 to 156 (DERESDSGEEGA) shows a compositional bias: acidic residues. Over residues 296–316 (KKSKKGPKKSKKKKGFSRRRH) the composition is skewed to basic residues.

It belongs to the SAS10 family. As to quaternary structure, part of the small subunit (SSU) processome, composed of more than 70 proteins and the RNA chaperone small nucleolar RNA (snoRNA) U3.

The protein localises to the nucleus. It is found in the nucleolus. It localises to the chromosome. Its subcellular location is the centromere. The protein resides in the cytoplasm. The protein localises to the cell projection. It is found in the axon. It localises to the dendrite. Its subcellular location is the filopodium. Part of the small subunit (SSU) processome, first precursor of the small eukaryotic ribosomal subunit. During the assembly of the SSU processome in the nucleolus, many ribosome biogenesis factors, an RNA chaperone and ribosomal proteins associate with the nascent pre-rRNA and work in concert to generate RNA folding, modifications, rearrangements and cleavage as well as targeted degradation of pre-ribosomal RNA by the RNA exosome. Its dissociation from the complex determines the transition from state pre-A1 to state pre-A1*. May inhibit mRNA translation. This chain is Neuroguidin-B (ngdn-b), found in Xenopus laevis (African clawed frog).